A 365-amino-acid polypeptide reads, in one-letter code: MEKTKVVVAMSGGVDSSVTAALLLEQGFEVIGITMQIWNPGEEAESKGERTCCSLTAIDDARRVADKLGISHYVLNFRSIFEEKVIDYFTSEYLRGRTPNPCIACNRYVKFEALLDRALSIGAEYIATGHYARLGYSGEYGRYTVRRPVDRRKDQTYVLYGMTQRQIARTMMPLGNYTKGQVRKIAEDFGLPVAGKAESQEICFILDDDYRRFLREKAAGIKPGPFLNMKGEVIGRHNGIPFYTVGQRRGLGLAAGERLYVVKIDPENNAITLGPEEAVWGRSLIAADVNLILYESLEEPLEVEAQVRYNARTSPATLVPLPEGRVGVHFHTPQRSITPGQAVVFYRGDYLIGGATIESTGDFFR.

Residues 9–16 (AMSGGVDS) and Met-35 each bind ATP. Catalysis depends on Cys-105, which acts as the Nucleophile. A disulfide bridge links Cys-105 with Cys-203. Gly-129 contributes to the ATP binding site. The tract at residues 153–155 (KDQ) is interaction with tRNA. Cys-203 acts as the Cysteine persulfide intermediate in catalysis. The interaction with tRNA stretch occupies residues 308-309 (RY).

The protein belongs to the MnmA/TRMU family.

Its subcellular location is the cytoplasm. The enzyme catalyses S-sulfanyl-L-cysteinyl-[protein] + uridine(34) in tRNA + AH2 + ATP = 2-thiouridine(34) in tRNA + L-cysteinyl-[protein] + A + AMP + diphosphate + H(+). In terms of biological role, catalyzes the 2-thiolation of uridine at the wobble position (U34) of tRNA, leading to the formation of s(2)U34. The protein is tRNA-specific 2-thiouridylase MnmA of Pelotomaculum thermopropionicum (strain DSM 13744 / JCM 10971 / SI).